The chain runs to 553 residues: Zinc finger protein 426 (553 aa).

One can recognise a KRAB domain in the interval 40–111 (VSFDDVIVDF…KIVFPEWKIQ (72 aa)). 11 C2H2-type zinc fingers span residues 222–244 (FECS…QRTH), 277–299 (HRCK…MRTH), 305–327 (YECK…GRTH), 333–355 (YVCN…VRSH), 361–383 (YACK…IRTH), 389–411 (FVCV…LKMH), 417–439 (CECK…MRTH), 445–467 (YTCK…MRIH), 473–495 (YECK…ERTH), 501–525 (YECK…SHTH), and 531–553 (YKCQ…ERIH).

Its subcellular location is the nucleus. In terms of biological role, may be involved in transcriptional regulation. In Rattus norvegicus (Rat), this protein is Zinc finger protein 426 (Znf426).